The chain runs to 113 residues: Hydrogenase maturation factor HypA (113 aa).

H2 is a Ni(2+) binding site. Zn(2+)-binding residues include C73, C76, C89, and C92.

Belongs to the HypA/HybF family.

Involved in the maturation of [NiFe] hydrogenases. Required for nickel insertion into the metal center of the hydrogenase. The chain is Hydrogenase maturation factor HypA from Chlorobium phaeobacteroides (strain BS1).